The chain runs to 2067 residues: MEVFVFGDQSTRFAPPLKDLLLKGNSPYLTHFVKQVHALLRREISSLPAVQQKLFPNFADIQELVSKSDWGSGNPALTSALACFYHLCSFIHFYDGQGRTFPSENSRIIGLCVGSLAAAAVSCSTSLSELVSAGVDAVRVALHVGLRVWRTTSLFDVPDRPSATWSIIVPEAVLPRESAQDRLDSFIIEMGLARSSVPYISSVAHHNMTISGPPSVLEKFIHSISTSPKDSLPVPIYAPYHASHLYSMDDVDEVLSLSAPSFASESIIPLISSSSGDELQPLKYADLLRCCVSDMLIQPLDLTKVSQAVAQLLEVSSSTRAIIKPIATSVSNSLVSALEPTLAERCAVDNSMGPKASTSHSSAETQTESSSKNSKIAIVAMSGRFPDAADLGEFWDLLYKGRDVHRQIPEDRFNAELHYDATGRRKNTSKVMNGCFIKEPGLFDARFFNMSPKEAEQSDPGQRMALETAYEALEMAGIVPDRTPSTQRDRVGVFYGMTSDDWREVNSGQNVDTYFIPGGNRAFTPGRLNYFFKFSGPSASVDTACSSSLAALHLACNSLWRNDCDTAIAGGTNVMTNPDNFAGLDRGHFLSRTGNCNTFDDGADGYCRADGVGTIILKRLEDAEADNDPILGVILGAYTNHSAEAVSITRPHAGAQEYIFSKLLRESGTDPYNVSYIEMHGTGTQAGDATEMTSVLKTFAPTSGFGGRLPHQNLHLGSVKANVGHGESASGIIALIKTLLMMEKNMIPPHCGIKTKINHHFPTDLTQRNVHIAKVPTSWTRSGQANPRIAFVNNFSAAGGNSAVLLQDAPRPSVVSDVTDPRSSHVVTMSARSADSLRKNLANLKELVEGQGDSEVDFLSKLSYTTTARRMHHQFRASVTAQTREQLLKGLDSAIERQDVKRIPAAAPSVGFVFSGQGAQYRGMGKEYFTSFTAFRSEIMSYDSIAQAQGFPSILPLIRGEVEADSLSPVEIQLGLTCLQMALAKLWKSFGVEPGFVLGHSLGHYAALHVAGVLSANDTIYLTGIRAQLLVDKCQAGTHSMLAVRASLLQIQQFLDANIHEVACVNGPREVVISGRVADIDQLVGLLSADNIKATRVKVPFAFHSAQVDPILSDLDTAASRVTFHSPQIPVLCALDSSVISPGNHGVIGPLHLQRHCRETVNFEGALHAAEREKIINKTSTLWIEIGPHVVCSTFLKSSLGPSTPTIASLRRNDDCWKVLADGLSSLYSSGLTIDWNEYHRDFKASHQVLRLPCYSWEHKNYWIQYKYDWSLTKGDPPIAPNSSVEAVSALSTPSVQKILQETSLDQVLTIVAETDLASPLLSEVAQGHRVNGVKVCTSSVYADVGLTLGKYILDNYRTDLEGYAVDVHGIEVHKPLLLKEDMNGTPQATPFRIEVRYPIQSTTALMSISTTGPNGQHIKHANCELRLEHPSQWEAEWDRQAYLINRSVNYLLQRSAQGLDSMLATGMVYKVFSSLVDYADGYKGLQEVVLHSQELEGTAKVRFQTPSGGFVCNPMWIDSCGQTTGFMMNCHQTTPNDYVYVNHGWKSMRLAKAFREDGTYRTYIRMRPIDSTKFAGDLYILDEDDTVVGVYGDITFQGLPRRVLNTVLPSANAVPVDAPMGRRDVPPSRMDVPPVRSGEGPPTSAPTQQAIALPFAADTSMDSRLRPLLRILSEEIGLGLDVLSDDELDFADHGVDSLLSLTITGRMREELGLDVESTAFMNCPTLGSFKLFLGLVDQDNKSSSGSDGSGRSSPAPGIESGATTPPMSEEDQDKIVSSHSLHQFQASSTLLQGSPSKARSTLFLLPDGSGSATSYASLPPISPDGDVAVYGLNCPWLKDASYLVEFGLKGLTELYVNEILRRKPQGPYNLGGWSAGGICAYEAALILTRAGHQVDRLILIDSPNPVGLEKLPPRLYDFLNSQNVFGSDNPHSTAGTSVKAPEWLLAHFLAFIDALDAYVAVPWDSGLVGLASPLPAPPQTYMLWAEDGVCKDSDSARPEYRDDDPREMRWLLENRTNFGPNGWEALLGGKEGLFMDRIAEANHFSMLKRGRNAEYVSAFLARALDN.

The interval 4–241 (FVFGDQSTRF…LPVPIYAPYH (238 aa)) is N-terminal acylcarrier protein transacylase (SAT) domain. The tract at residues 350 to 373 (NSMGPKASTSHSSAETQTESSSKN) is disordered. Positions 356–373 (ASTSHSSAETQTESSSKN) are enriched in polar residues. Residues 373 to 808 (NSKIAIVAMS…GGNSAVLLQD (436 aa)) enclose the Ketosynthase family 3 (KS3) domain. Active-site for beta-ketoacyl synthase activity residues include C545, H680, and H725. The tract at residues 912–1199 (FVFSGQGAQY…VVCSTFLKSS (288 aa)) is malonyl-CoA:ACP transacylase (MAT) domain. S1001 functions as the For acyl/malonyl transferase activity in the catalytic mechanism. The N-terminal hotdog fold stretch occupies residues 1297–1433 (QKILQETSLD…CELRLEHPSQ (137 aa)). The region spanning 1297-1606 (QKILQETSLD…FQGLPRRVLN (310 aa)) is the PKS/mFAS DH domain. The Proton acceptor; for dehydratase activity role is filled by H1329. Residues 1329-1604 (HRVNGVKVCT…ITFQGLPRRV (276 aa)) form a product template (PT) domain region. The C-terminal hotdog fold stretch occupies residues 1460–1606 (LDSMLATGMV…FQGLPRRVLN (147 aa)). D1519 acts as the Proton donor; for dehydratase activity in catalysis. Positions 1619-1648 (APMGRRDVPPSRMDVPPVRSGEGPPTSAPT) are disordered. Residues 1660–1738 (TSMDSRLRPL…SFKLFLGLVD (79 aa)) form the Carrier domain. Residue S1698 is modified to O-(pantetheine 4'-phosphoryl)serine. The interval 1742 to 1779 (KSSSGSDGSGRSSPAPGIESGATTPPMSEEDQDKIVSS) is disordered. Positions 1743 to 1754 (SSSGSDGSGRSS) are enriched in low complexity. The claisen cyclase domain stretch occupies residues 1781–2065 (SLHQFQASST…YVSAFLARAL (285 aa)). S1875 serves as the catalytic For Claisen cyclase activity.

It catalyses the reaction 6 malonyl-CoA + acetyl-CoA + 6 H(+) = naphtopyrone YWA1 + 6 CO2 + 7 CoA + H2O. The protein operates within pigment biosynthesis. Its function is as follows. Non-reducing polyketide synthase; part of the gene cluster that mediates the biosynthesis of aurofusarin, a red mycelium pigment which is acting as a mycotoxin. The first step is performed by the polyketide synthase which condenses one acetyl-CoA and 6 malonyl-CoA units to form the first intermediate, the cyclic heptaketide and yellow pigment YWA1. The C2 hydroxyl group in the pyrone ring of YWA1 is probably formed during ring closure by an aldol-type cyclization reaction. The dehydratase aurZ then acts as the first tailoring enzyme in the aurofusarin biosynthetic pathway by converting YWA1 to nor-rubrofusarin. Nor-rubrofusarin is then methylated to rubrofusarin by the O-methyltransferase aurJ. Rubrofusarin is then transported across the plasma membrane by the rubrofusarin-specific pump aurT for further enzymatic processing by the extracellular complex composed of GIP1, aurF, aurO and aurS to yield aurofusarin. This Gibberella zeae (strain ATCC MYA-4620 / CBS 123657 / FGSC 9075 / NRRL 31084 / PH-1) (Wheat head blight fungus) protein is Non-reducing polyketide synthase PKS12.